Here is a 408-residue protein sequence, read N- to C-terminus: Innexin-12 (408 aa).

The chain crosses the membrane as a helical span at residues 29–49 (TIGLVLASAFITGWSFVGSPI). The N-linked (GlcNAc...) asparagine glycan is linked to Asn-99. 3 helical membrane passes run 113 to 133 (QWVP…VVIW), 197 to 217 (VITS…FQFV), and 284 to 304 (IFVA…TNTI).

The protein belongs to the pannexin family.

It is found in the cell membrane. It localises to the cell junction. The protein resides in the gap junction. Its function is as follows. Structural component of the gap junctions. Plays a role in oocyte directional transit in the spermatheca during ovulation by facilitating the directional propagation of the calcium signal in the spermatheca. Plays a role in male tail tip morphogenesis. The polypeptide is Innexin-12 (Caenorhabditis elegans).